The following is a 264-amino-acid chain: Putative hydro-lyase Psyr_0498 (264 aa).

This sequence belongs to the D-glutamate cyclase family.

The polypeptide is Putative hydro-lyase Psyr_0498 (Pseudomonas syringae pv. syringae (strain B728a)).